Reading from the N-terminus, the 341-residue chain is Heme A synthase (341 aa).

5 consecutive transmembrane segments (helical) span residues 11–31, 101–121, 127–147, 160–180, and 194–214; these read AVSTWLLVVAALVCAMIIIGG, LIGLVYFVPFVFFWMRGHLSA, LFGLFLLGGAQGAIGWWMVAS, LATHLGMAFVILGLSIWFSLE, and AGVTAGLLGLVFVQIILGAFV. His-259 provides a ligand contact to heme. Helical transmembrane passes span 261–278, 288–308, and 315–335; these read WTGYLVALGVFAYAWQVW, FMVILPALVIGQIALGIAALL, and LSLAHQAGAILLFIAMVAAAW. His-319 contributes to the heme binding site.

It belongs to the COX15/CtaA family. Type 2 subfamily. In terms of assembly, interacts with CtaB. Heme b is required as a cofactor.

The protein resides in the cell membrane. The catalysed reaction is Fe(II)-heme o + 2 A + H2O = Fe(II)-heme a + 2 AH2. It participates in porphyrin-containing compound metabolism; heme A biosynthesis; heme A from heme O: step 1/1. Functionally, catalyzes the conversion of heme O to heme A by two successive hydroxylations of the methyl group at C8. The first hydroxylation forms heme I, the second hydroxylation results in an unstable dihydroxymethyl group, which spontaneously dehydrates, resulting in the formyl group of heme A. The chain is Heme A synthase from Maricaulis maris (strain MCS10) (Caulobacter maris).